Here is a 635-residue protein sequence, read N- to C-terminus: UvrABC system protein C (635 aa).

The span at 1–14 (MAQNHMSETMNDIS) shows a compositional bias: polar residues. The tract at residues 1 to 27 (MAQNHMSETMNDISAESPDQPEPPRTG) is disordered. The GIY-YIG domain maps to 40–117 (SSPGVYRMLD…IKQLKPKYNV (78 aa)). The 36-residue stretch at 227 to 262 (TKIQEELGAEMQAASEAMEYERAAALRDRIKALTQV) folds into the UVR domain.

This sequence belongs to the UvrC family. As to quaternary structure, interacts with UvrB in an incision complex.

The protein resides in the cytoplasm. In terms of biological role, the UvrABC repair system catalyzes the recognition and processing of DNA lesions. UvrC both incises the 5' and 3' sides of the lesion. The N-terminal half is responsible for the 3' incision and the C-terminal half is responsible for the 5' incision. This chain is UvrABC system protein C, found in Ruegeria sp. (strain TM1040) (Silicibacter sp.).